We begin with the raw amino-acid sequence, 140 residues long: 3-hydroxyacyl-[acyl-carrier-protein] dehydratase FabZ (140 aa).

H48 is an active-site residue.

Belongs to the thioester dehydratase family. FabZ subfamily.

It localises to the cytoplasm. The catalysed reaction is a (3R)-hydroxyacyl-[ACP] = a (2E)-enoyl-[ACP] + H2O. In terms of biological role, involved in unsaturated fatty acids biosynthesis. Catalyzes the dehydration of short chain beta-hydroxyacyl-ACPs and long chain saturated and unsaturated beta-hydroxyacyl-ACPs. In Caldicellulosiruptor saccharolyticus (strain ATCC 43494 / DSM 8903 / Tp8T 6331), this protein is 3-hydroxyacyl-[acyl-carrier-protein] dehydratase FabZ.